The primary structure comprises 130 residues: Albumin-1 B (130 aa).

The N-terminal stretch at 1 to 26 (MASVKLASLMVLFATLGMFLTKNVGA) is a signal peptide. Cystine bridges form between C29/C46, C33/C48, and C41/C58. Propeptides lie at residues 64–69 (VFLRTN) and 123–130 (LLKSVSTA).

Post-translationally, the C-terminal glycine may be removed from PA1b. In terms of tissue distribution, major component of both the cotyledons and embryonic axes of mature seeds.

Functionally, PA1b binds to basic 7S globulin (BG) and stimulates its phosphorylation activity. Involved in the signal transduction system to regulate the growth and differentiation as a hormone peptide. Toxic to various insects through binding to a high affinity binding site in the insect gut. In Pisum sativum (Garden pea), this protein is Albumin-1 B.